The sequence spans 754 residues: Endothelin-converting enzyme 1 (754 aa).

Over 1 to 52 (MMSTYKRATLDEEDLVDSLSEGEVYPNGLQVNFRNFRSSQRCWATRTQVEKR) the chain is Cytoplasmic. Threonine 9 is subject to Phosphothreonine. Residues 53 to 73 (LIVLVALLAAGLVACLTALGI) form a helical; Signal-anchor for type II membrane protein membrane-spanning segment. Topologically, residues 74–754 (QYRTRTPPVC…MNPRHKCEVW (681 aa)) are extracellular. Residues 82–754 (VCLSEACVSV…MNPRHKCEVW (673 aa)) form the Peptidase M13 domain. 5 disulfides stabilise this stretch: cysteine 83–cysteine 88, cysteine 106–cysteine 739, cysteine 114–cysteine 699, cysteine 169–cysteine 419, and cysteine 628–cysteine 751. 8 N-linked (GlcNAc...) asparagine glycosylation sites follow: asparagine 150, asparagine 171, asparagine 194, asparagine 254, asparagine 300, asparagine 346, asparagine 367, and asparagine 523. Residue histidine 591 coordinates Zn(2+). Glutamate 592 is a catalytic residue. Histidine 595 is a Zn(2+) binding site. N-linked (GlcNAc...) asparagine glycans are attached at residues asparagine 616 and asparagine 635. Residue glutamate 651 participates in Zn(2+) binding. Catalysis depends on aspartate 655, which acts as the Proton donor.

The protein belongs to the peptidase M13 family. In terms of assembly, homodimer; disulfide-linked. Interacts with PPP1R16B. Interacts with TSPAN8; this interaction recruits the endothelin converting enzyme ECE1 to tetraspanin-enriched microdomains and positively modulates its enzymatic activity. The cofactor is Zn(2+).

Its subcellular location is the cell membrane. The catalysed reaction is Hydrolysis of the 21-Trp-|-Val-22 bond in big endothelin to form endothelin 1.. Inhibited by phosphoramidon. Its function is as follows. Converts big endothelin-1 to endothelin-1. This chain is Endothelin-converting enzyme 1 (ECE1), found in Cavia porcellus (Guinea pig).